The primary structure comprises 337 residues: Anthranilate phosphoribosyltransferase (337 aa).

5-phospho-alpha-D-ribose 1-diphosphate is bound by residues G82, 85–86 (GD), T90, 92–95 (NIST), 110–118 (KHGGRSVSS), and S122. G82 lines the anthranilate pocket. A Mg(2+)-binding site is contributed by S94. Residue R168 coordinates anthranilate. D226 and E227 together coordinate Mg(2+).

It belongs to the anthranilate phosphoribosyltransferase family. In terms of assembly, homodimer. The cofactor is Mg(2+).

It carries out the reaction N-(5-phospho-beta-D-ribosyl)anthranilate + diphosphate = 5-phospho-alpha-D-ribose 1-diphosphate + anthranilate. The protein operates within amino-acid biosynthesis; L-tryptophan biosynthesis; L-tryptophan from chorismate: step 2/5. Its function is as follows. Catalyzes the transfer of the phosphoribosyl group of 5-phosphorylribose-1-pyrophosphate (PRPP) to anthranilate to yield N-(5'-phosphoribosyl)-anthranilate (PRA). The sequence is that of Anthranilate phosphoribosyltransferase from Francisella tularensis subsp. mediasiatica (strain FSC147).